A 101-amino-acid polypeptide reads, in one-letter code: Small ribosomal subunit protein bS6 (101 aa).

Belongs to the bacterial ribosomal protein bS6 family.

Functionally, binds together with bS18 to 16S ribosomal RNA. The protein is Small ribosomal subunit protein bS6 of Staphylococcus saprophyticus subsp. saprophyticus (strain ATCC 15305 / DSM 20229 / NCIMB 8711 / NCTC 7292 / S-41).